The chain runs to 78 residues: Defensin beta 136 (78 aa).

Residues 1–21 form the signal peptide; it reads MNLCLSSLLFFLVILLPSGKG. 3 cysteine pairs are disulfide-bonded: Cys-33–Cys-60, Cys-40–Cys-54, and Cys-44–Cys-61.

Belongs to the beta-defensin family.

Its subcellular location is the secreted. Host defense peptide that exhibits antimicrobial and antifungal activity. Exhibits antimicrobial activity against E.coli, S.aureus and C.albicans (in vitro). Has high lipopolysaccharide (LPS)-binding affinity, and may thereby be involved in immunoregulation through LPS neutralization. This is Defensin beta 136 (DEFB136) from Pan troglodytes (Chimpanzee).